Here is a 97-residue protein sequence, read N- to C-terminus: Citrate lyase acyl carrier protein (97 aa).

Serine 14 carries the post-translational modification O-(phosphoribosyl dephospho-coenzyme A)serine.

It belongs to the CitD family. As to quaternary structure, oligomer with a subunit composition of (alpha,beta,gamma)6.

It is found in the cytoplasm. Covalent carrier of the coenzyme of citrate lyase. This is Citrate lyase acyl carrier protein from Escherichia fergusonii (strain ATCC 35469 / DSM 13698 / CCUG 18766 / IAM 14443 / JCM 21226 / LMG 7866 / NBRC 102419 / NCTC 12128 / CDC 0568-73).